The sequence spans 446 residues: Probable 1,4-beta-D-glucan cellobiohydrolase A (446 aa).

The N-terminal stretch at 1–17 (MYQRALLFSALLSVSRA) is a signal peptide. N-linked (GlcNAc...) asparagine glycosylation occurs at asparagine 81. The active-site Nucleophile is glutamate 226. Glutamate 231 functions as the Proton donor in the catalytic mechanism. 2 N-linked (GlcNAc...) asparagine glycosylation sites follow: asparagine 284 and asparagine 333. The tract at residues 399 to 420 (TDADPSQPGVARGTCEQGAGDP) is disordered.

The protein belongs to the glycosyl hydrolase 7 (cellulase C) family.

Its subcellular location is the secreted. It carries out the reaction Hydrolysis of (1-&gt;4)-beta-D-glucosidic linkages in cellulose and cellotetraose, releasing cellobiose from the non-reducing ends of the chains.. In terms of biological role, the biological conversion of cellulose to glucose generally requires three types of hydrolytic enzymes: (1) Endoglucanases which cut internal beta-1,4-glucosidic bonds; (2) Exocellobiohydrolases that cut the disaccharide cellobiose from the non-reducing end of the cellulose polymer chain; (3) Beta-1,4-glucosidases which hydrolyze the cellobiose and other short cello-oligosaccharides to glucose. In Emericella nidulans (strain FGSC A4 / ATCC 38163 / CBS 112.46 / NRRL 194 / M139) (Aspergillus nidulans), this protein is Probable 1,4-beta-D-glucan cellobiohydrolase A (cbhA).